Consider the following 258-residue polypeptide: Imidazole glycerol phosphate synthase subunit HisF (258 aa).

Catalysis depends on residues D12 and D131.

The protein belongs to the HisA/HisF family. In terms of assembly, heterodimer of HisH and HisF.

The protein resides in the cytoplasm. It catalyses the reaction 5-[(5-phospho-1-deoxy-D-ribulos-1-ylimino)methylamino]-1-(5-phospho-beta-D-ribosyl)imidazole-4-carboxamide + L-glutamine = D-erythro-1-(imidazol-4-yl)glycerol 3-phosphate + 5-amino-1-(5-phospho-beta-D-ribosyl)imidazole-4-carboxamide + L-glutamate + H(+). It participates in amino-acid biosynthesis; L-histidine biosynthesis; L-histidine from 5-phospho-alpha-D-ribose 1-diphosphate: step 5/9. IGPS catalyzes the conversion of PRFAR and glutamine to IGP, AICAR and glutamate. The HisF subunit catalyzes the cyclization activity that produces IGP and AICAR from PRFAR using the ammonia provided by the HisH subunit. This Corynebacterium glutamicum (strain R) protein is Imidazole glycerol phosphate synthase subunit HisF.